The sequence spans 349 residues: UDP-3-O-acylglucosamine N-acyltransferase (349 aa).

The active-site Proton acceptor is His242.

Belongs to the transferase hexapeptide repeat family. LpxD subfamily. In terms of assembly, homotrimer.

It catalyses the reaction a UDP-3-O-[(3R)-3-hydroxyacyl]-alpha-D-glucosamine + a (3R)-hydroxyacyl-[ACP] = a UDP-2-N,3-O-bis[(3R)-3-hydroxyacyl]-alpha-D-glucosamine + holo-[ACP] + H(+). Its pathway is bacterial outer membrane biogenesis; LPS lipid A biosynthesis. Functionally, catalyzes the N-acylation of UDP-3-O-acylglucosamine using 3-hydroxyacyl-ACP as the acyl donor. Is involved in the biosynthesis of lipid A, a phosphorylated glycolipid that anchors the lipopolysaccharide to the outer membrane of the cell. This Cytophaga hutchinsonii (strain ATCC 33406 / DSM 1761 / CIP 103989 / NBRC 15051 / NCIMB 9469 / D465) protein is UDP-3-O-acylglucosamine N-acyltransferase.